The primary structure comprises 493 residues: Guanosine-5'-triphosphate,3'-diphosphate pyrophosphatase (493 aa).

The protein belongs to the GppA/Ppx family. GppA subfamily.

It carries out the reaction guanosine 3'-diphosphate 5'-triphosphate + H2O = guanosine 3',5'-bis(diphosphate) + phosphate + H(+). It participates in purine metabolism; ppGpp biosynthesis; ppGpp from GTP: step 2/2. Catalyzes the conversion of pppGpp to ppGpp. Guanosine pentaphosphate (pppGpp) is a cytoplasmic signaling molecule which together with ppGpp controls the 'stringent response', an adaptive process that allows bacteria to respond to amino acid starvation, resulting in the coordinated regulation of numerous cellular activities. This Salmonella paratyphi B (strain ATCC BAA-1250 / SPB7) protein is Guanosine-5'-triphosphate,3'-diphosphate pyrophosphatase.